Here is a 173-residue protein sequence, read N- to C-terminus: uncharacterized protein (173 aa).

One can recognise an MSP domain in the interval 16-133 (DLVLRPETIT…KHVLIRFPNK (118 aa)). Residues 141-163 (KKMEEDDMKQQKERNKLSNEKMG) are compositionally biased toward basic and acidic residues. The tract at residues 141-173 (KKMEEDDMKQQKERNKLSNEKMGIRNQNMGEKK) is disordered.

This is an uncharacterized protein from Caenorhabditis elegans.